A 313-amino-acid polypeptide reads, in one-letter code: tRNA uridine(34) hydroxylase (313 aa).

Residues S127–S225 enclose the Rhodanese domain. C185 acts as the Cysteine persulfide intermediate in catalysis.

It belongs to the TrhO family.

It carries out the reaction uridine(34) in tRNA + AH2 + O2 = 5-hydroxyuridine(34) in tRNA + A + H2O. Catalyzes oxygen-dependent 5-hydroxyuridine (ho5U) modification at position 34 in tRNAs. This chain is tRNA uridine(34) hydroxylase, found in Gluconobacter oxydans (strain 621H) (Gluconobacter suboxydans).